The following is a 297-amino-acid chain: Aspartate dehydrogenase domain-containing protein (297 aa).

A phosphoserine mark is found at S24 and S172.

The protein belongs to the L-aspartate dehydrogenase family.

This chain is Aspartate dehydrogenase domain-containing protein, found in Rattus norvegicus (Rat).